The chain runs to 99 residues: Progonadoliberin-1 (99 aa).

Residues 1–26 (MAAQTFALRLLLVGTLLGTLLGQGCC) form the signal peptide. At Q27 the chain carries Pyrrolidone carboxylic acid. G36 carries the glycine amide modification.

Belongs to the GnRH family.

It is found in the secreted. Functionally, stimulates the secretion of gonadotropins. The chain is Progonadoliberin-1 (gnrh1) from Dicentrarchus labrax (European seabass).